The chain runs to 610 residues: Phosphoenolpyruvate carboxykinase [GTP] (610 aa).

Substrate contacts are provided by residues R82 and 221-223 (YGG). Mn(2+) contacts are provided by K230 and H250. S272 serves as a coordination point for substrate. A GTP-binding site is contributed by 273–278 (ACGKTN). The active site involves C274. Position 297 (D297) interacts with Mn(2+). 387–389 (NSR) is a binding site for substrate. Residues R389, R420, and 515–518 (FGDN) each bind GTP.

Belongs to the phosphoenolpyruvate carboxykinase [GTP] family. As to quaternary structure, monomer. It depends on Mn(2+) as a cofactor.

Its subcellular location is the cytoplasm. The enzyme catalyses oxaloacetate + GTP = phosphoenolpyruvate + GDP + CO2. Its pathway is carbohydrate biosynthesis; gluconeogenesis. Functionally, involved in the gluconeogenesis. Catalyzes the conversion of oxaloacetate (OAA) to phosphoenolpyruvate (PEP), the rate-limiting step in the metabolic pathway that produces glucose from lactate and other precursors derived from the citric acid cycle. The chain is Phosphoenolpyruvate carboxykinase [GTP] from Corynebacterium glutamicum (strain ATCC 13032 / DSM 20300 / JCM 1318 / BCRC 11384 / CCUG 27702 / LMG 3730 / NBRC 12168 / NCIMB 10025 / NRRL B-2784 / 534).